Here is a 350-residue protein sequence, read N- to C-terminus: D-alanine--D-alanine ligase (350 aa).

Positions 143–344 (KRILSTFGIS…FKSLINKLIL (202 aa)) constitute an ATP-grasp domain. 172-227 (INNIKFPCCIKPSNQGSSFGVNVANDFISLKESIDVAFLYSKKILIEPFIQGREIE) provides a ligand contact to ATP. Positions 298, 311, and 313 each coordinate Mg(2+).

Belongs to the D-alanine--D-alanine ligase family. The cofactor is Mg(2+). Mn(2+) serves as cofactor.

The protein resides in the cytoplasm. The enzyme catalyses 2 D-alanine + ATP = D-alanyl-D-alanine + ADP + phosphate + H(+). It functions in the pathway cell wall biogenesis; peptidoglycan biosynthesis. Cell wall formation. This chain is D-alanine--D-alanine ligase, found in Wigglesworthia glossinidia brevipalpis.